Reading from the N-terminus, the 301-residue chain is MQLMDLRKQGIDIQENIPLSRFTFTKTGGPAQYLAFPKNLNELELLVDTVKENNIPLTVIGNASNLIIRDGGISGLVLILTKMDTIVANKDEATVTADAGARIIDTSEAACEAGLSGLEFAAGIPGSVGGAVFMNAGAYGGETEFVIKSVRVLTRAGEFKTYTHDEMEFGYRHSLVQETGDIVVSATFGLEPGDKWAIKAKMEYFNGLRRAKQPLEYPSCGSVFKRPAGHFVGPMIIKAGLQGKRIGGAEDSMKHAGFIVNVGGATATDYLDLIHLIQKTIKKDFGIDLQTEVRIIGKEKD.

An FAD-binding PCMH-type domain is found at 26–193 (KTGGPAQYLA…VSATFGLEPG (168 aa)). The active site involves Arg172. Ser222 functions as the Proton donor in the catalytic mechanism. The active site involves Glu292.

Belongs to the MurB family. Requires FAD as cofactor.

It is found in the cytoplasm. It carries out the reaction UDP-N-acetyl-alpha-D-muramate + NADP(+) = UDP-N-acetyl-3-O-(1-carboxyvinyl)-alpha-D-glucosamine + NADPH + H(+). It functions in the pathway cell wall biogenesis; peptidoglycan biosynthesis. In terms of biological role, cell wall formation. The polypeptide is UDP-N-acetylenolpyruvoylglucosamine reductase (Lactobacillus johnsonii (strain CNCM I-12250 / La1 / NCC 533)).